We begin with the raw amino-acid sequence, 350 residues long: Patr class I histocompatibility antigen, alpha chain E (350 aa).

A signal peptide spans 1-21; it reads MVDGTLLLLLSEALALTQTWA. The segment at 22–111 is alpha-1; that stretch reads GSHSLKYFHT…LRGYYNQSEA (90 aa). Residues 22–305 lie on the Extracellular side of the membrane; sequence GSHSLKYFHT…KPASQPTIPI (284 aa). An N-linked (GlcNAc...) asparagine glycan is attached at asparagine 107. An alpha-2 region spans residues 112-203; it reads GSHTLQWMHG…EKGKETLLHL (92 aa). Intrachain disulfides connect cysteine 122-cysteine 185 and cysteine 224-cysteine 280. The tract at residues 204–295 is alpha-3; the sequence is EPPKTHVTHH…GLPEPLTLRW (92 aa). Residues 206 to 294 enclose the Ig-like C1-type domain; sequence PKTHVTHHPI…EGLPEPLTLR (89 aa). Positions 296 to 305 are connecting peptide; it reads KPASQPTIPI. The helical transmembrane segment at 306-329 threads the bilayer; the sequence is VGIIAGLVLLGSVVSGAVVAAVMW. Residues 330–350 are Cytoplasmic-facing; sequence RKKSSGGKGRSYSKAEWSDSA.

Belongs to the MHC class I family. In terms of assembly, heterodimer of an alpha chain and a beta chain (beta-2-microglobulin).

The protein localises to the membrane. Preferably binds to a peptide derived from the signal sequence of most HLA-A, -B, -C and -G molecules. This chain is Patr class I histocompatibility antigen, alpha chain E (Patr-E), found in Pan troglodytes (Chimpanzee).